The following is an 83-amino-acid chain: MWFKIQVLVLAITLITLGIQAEPNSSPNNPLIVEEDRAECAAVYERCGKGYKRCCEERPCKCNIVMDNCTCKKFISELFGFGK.

The signal sequence occupies residues 1-21 (MWFKIQVLVLAITLITLGIQA). Residues 22–37 (EPNSSPNNPLIVEEDR) constitute a propeptide that is removed on maturation. Cystine bridges form between Cys40-Cys55, Cys47-Cys60, Cys54-Cys71, and Cys62-Cys69. Residues 78 to 83 (LFGFGK) constitute a propeptide that is removed on maturation.

The protein belongs to the neurotoxin 02 (plectoxin) family. Expressed by the venom gland.

It is found in the secreted. Functionally, antagonist of L-type calcium channels (Cav1/CACNA1). In GH3 neuroendocrinal cell line, it reversibly inhibits the A-type potassium current but does not block other potassium currents or calcium channels. Shows an important acetylcholine-mediated antiarrhythmogenic effect in isolated hearts. In vivo, causes paralysis in the posterior limbs and gradual decreases in movement and aggression during 24 hours at dose levels of 5 ug per mouse. The polypeptide is Kappa-ctenitoxin-Pn1a (Phoneutria nigriventer (Brazilian armed spider)).